The primary structure comprises 123 residues: Small ribosomal subunit protein uS12 (123 aa).

The disordered stretch occupies residues M1–P45. Residues I8 to S21 are compositionally biased toward basic residues.

It belongs to the universal ribosomal protein uS12 family. In terms of assembly, part of the 30S ribosomal subunit. Contacts proteins S8 and S17. May interact with IF1 in the 30S initiation complex.

Its function is as follows. With S4 and S5 plays an important role in translational accuracy. Interacts with and stabilizes bases of the 16S rRNA that are involved in tRNA selection in the A site and with the mRNA backbone. Located at the interface of the 30S and 50S subunits, it traverses the body of the 30S subunit contacting proteins on the other side and probably holding the rRNA structure together. The combined cluster of proteins S8, S12 and S17 appears to hold together the shoulder and platform of the 30S subunit. This is Small ribosomal subunit protein uS12 from Chlamydia muridarum (strain MoPn / Nigg).